The chain runs to 48 residues: Delta-stichotoxin-She1a (48 aa).

3 cysteine pairs are disulfide-bonded: Cys3–Cys43, Cys5–Cys33, and Cys26–Cys44.

Belongs to the sea anemone sodium channel inhibitory toxin family. Type II subfamily.

It localises to the secreted. The protein resides in the nematocyst. In terms of biological role, binds specifically to voltage-gated sodium channels (Nav), thereby delaying their inactivation during signal transduction. Is highly toxic to crabs (by intrahemocoelic injection), but without effect upon mice (by intraperitoneal injection). The chain is Delta-stichotoxin-She1a from Stichodactyla helianthus (Sun anemone).